A 910-amino-acid polypeptide reads, in one-letter code: Protein translocase subunit SecA (910 aa).

ATP contacts are provided by residues Gln89, 107 to 111 (GEGKT), and Asp502. 4 residues coordinate Zn(2+): Cys894, Cys896, Cys905, and His906.

The protein belongs to the SecA family. Monomer and homodimer. Part of the essential Sec protein translocation apparatus which comprises SecA, SecYEG and auxiliary proteins SecDF-YajC and YidC. Zn(2+) is required as a cofactor.

The protein resides in the cell inner membrane. It is found in the cytoplasm. The catalysed reaction is ATP + H2O + cellular proteinSide 1 = ADP + phosphate + cellular proteinSide 2.. Its function is as follows. Part of the Sec protein translocase complex. Interacts with the SecYEG preprotein conducting channel. Has a central role in coupling the hydrolysis of ATP to the transfer of proteins into and across the cell membrane, serving both as a receptor for the preprotein-SecB complex and as an ATP-driven molecular motor driving the stepwise translocation of polypeptide chains across the membrane. In Chelativorans sp. (strain BNC1), this protein is Protein translocase subunit SecA.